The sequence spans 541 residues: Beta-hexosaminidase subunit A2 (541 aa).

Positions Met-1 to Ser-21 are cleaved as a signal peptide. Glu-314 acts as the Proton donor in catalysis. 5 N-linked (GlcNAc...) asparagine glycosylation sites follow: Asn-322, Asn-336, Asn-356, Asn-435, and Asn-483.

The protein belongs to the glycosyl hydrolase 20 family.

Its subcellular location is the lysosome. It catalyses the reaction Hydrolysis of terminal non-reducing N-acetyl-D-hexosamine residues in N-acetyl-beta-D-hexosaminides.. Its function is as follows. Responsible for the degradation of GM2 gangliosides, and a variety of other molecules containing terminal N-acetyl hexosamines. The sequence is that of Beta-hexosaminidase subunit A2 (hexa2) from Dictyostelium discoideum (Social amoeba).